Consider the following 272-residue polypeptide: Serine/arginine-rich splicing factor 5 (272 aa).

An RRM 1 domain is found at 4 to 74; that stretch reads CRVFIGRLNP…ERVTIEHARA (71 aa). The interval 73–105 is disordered; the sequence is RARSRGGRGRGRYSDRFSSRRPRNDRRNAPPVR. The span at 74–83 shows a compositional bias: basic residues; sequence ARSRGGRGRG. Serine 86 bears the Phosphoserine mark. The region spanning 108-181 is the RRM 2 domain; it reads NRLIVENLSS…RKIKLIEGSK (74 aa). Position 167 is an N6-acetyllysine (lysine 167). The tract at residues 174–272 is disordered; that stretch reads IKLIEGSKRH…SRSRSVDSGN (99 aa). Over residues 182-229 the composition is skewed to basic residues; it reads RHSRSRSRSRSRTRSSSRSRSRSRSRSRKSYSRSRSRSRSRSRSKSRS. Residues serine 227, serine 229, serine 233, serine 250, and serine 253 each carry the phosphoserine modification. Residues 242 to 254 are compositionally biased toward low complexity; the sequence is RGSSSRSKSPASV.

It belongs to the splicing factor SR family. In terms of assembly, interacts (via RS domain) with PHF5A (via N-terminus). Found in a pre-mRNA splicing complex with SRSF4/SFRS4, SRSF5/SFRS5, SNRNP70, SNRPA1, SRRM1 and SRRM2. Post-translationally, extensively phosphorylated on serine residues in the RS domain.

It is found in the nucleus. Plays a role in constitutive splicing and can modulate the selection of alternative splice sites. The polypeptide is Serine/arginine-rich splicing factor 5 (SRSF5) (Homo sapiens (Human)).